A 101-amino-acid chain; its full sequence is Large ribosomal subunit protein eL36 (101 aa).

Disordered stretches follow at residues 1–31 (MGEI…GFLS) and 75–101 (GTHM…SKGE).

Belongs to the eukaryotic ribosomal protein eL36 family.

This is Large ribosomal subunit protein eL36 (RL36) from Ulva compressa (Green alga).